A 250-amino-acid polypeptide reads, in one-letter code: Small ribosomal subunit protein uS3 (250 aa).

The KH type-2 domain maps to 39 to 109 (IRNYVQARLK…EVKIDVVEVI (71 aa)). Residues 225–239 (INERRGDSKSRPRDP) are compositionally biased toward basic and acidic residues. The segment at 225 to 250 (INERRGDSKSRPRDPRNKRRRRTKRS) is disordered. Basic residues predominate over residues 240–250 (RNKRRRRTKRS).

Belongs to the universal ribosomal protein uS3 family. In terms of assembly, part of the 30S ribosomal subunit. Forms a tight complex with proteins S10 and S14.

Binds the lower part of the 30S subunit head. Binds mRNA in the 70S ribosome, positioning it for translation. The sequence is that of Small ribosomal subunit protein uS3 from Chlorobium phaeobacteroides (strain DSM 266 / SMG 266 / 2430).